A 69-amino-acid chain; its full sequence is UPF0337 protein YjbJ (69 aa).

This sequence belongs to the UPF0337 (CsbD) family.

This is UPF0337 protein YjbJ (yjbJ) from Escherichia coli O157:H7.